A 362-amino-acid polypeptide reads, in one-letter code: UDP-N-acetylglucosamine--N-acetylmuramyl-(pentapeptide) pyrophosphoryl-undecaprenol N-acetylglucosamine transferase (362 aa).

UDP-N-acetyl-alpha-D-glucosamine-binding positions include 15-17, Asn127, Arg165, Ser191, Ile247, 266-271, and Gln292; these read TGG and ALTVSE.

The protein belongs to the glycosyltransferase 28 family. MurG subfamily.

The protein resides in the cell inner membrane. The catalysed reaction is di-trans,octa-cis-undecaprenyl diphospho-N-acetyl-alpha-D-muramoyl-L-alanyl-D-glutamyl-meso-2,6-diaminopimeloyl-D-alanyl-D-alanine + UDP-N-acetyl-alpha-D-glucosamine = di-trans,octa-cis-undecaprenyl diphospho-[N-acetyl-alpha-D-glucosaminyl-(1-&gt;4)]-N-acetyl-alpha-D-muramoyl-L-alanyl-D-glutamyl-meso-2,6-diaminopimeloyl-D-alanyl-D-alanine + UDP + H(+). It participates in cell wall biogenesis; peptidoglycan biosynthesis. In terms of biological role, cell wall formation. Catalyzes the transfer of a GlcNAc subunit on undecaprenyl-pyrophosphoryl-MurNAc-pentapeptide (lipid intermediate I) to form undecaprenyl-pyrophosphoryl-MurNAc-(pentapeptide)GlcNAc (lipid intermediate II). In Shewanella sp. (strain ANA-3), this protein is UDP-N-acetylglucosamine--N-acetylmuramyl-(pentapeptide) pyrophosphoryl-undecaprenol N-acetylglucosamine transferase.